The sequence spans 107 residues: Phosphoribosyl-ATP pyrophosphatase (107 aa).

It belongs to the PRA-PH family.

It localises to the cytoplasm. It catalyses the reaction 1-(5-phospho-beta-D-ribosyl)-ATP + H2O = 1-(5-phospho-beta-D-ribosyl)-5'-AMP + diphosphate + H(+). It participates in amino-acid biosynthesis; L-histidine biosynthesis; L-histidine from 5-phospho-alpha-D-ribose 1-diphosphate: step 2/9. This chain is Phosphoribosyl-ATP pyrophosphatase, found in Methylobacterium radiotolerans (strain ATCC 27329 / DSM 1819 / JCM 2831 / NBRC 15690 / NCIMB 10815 / 0-1).